Here is a 642-residue protein sequence, read N- to C-terminus: MPVITLPDGSQRQYDHAVSVLDVALDIGPGLAKACIAGRVNGELVDASDLIESDAQLAIITAKDAEGLEILRHSCAHLLGHAIKQLWPDTKMAIGPVIDNGFYYDVDINRTLTQEDLDLLEKRMHELADKDYDVIKKKVSWQEARDTFAARGEDYKVAILDENISRDDHPGLYHHEEYVDMCRGPHVPNMRFCHHFKLQKTSGAYWRGDSKNKMLQRIYGTAWSDKKQLNAYLQRLEEAAKRDHRKIGKQLDLYHMQEEAPGMVFWHNDGWTIFRELETFVRMKLKEYQYQEVKGPFMMDRVLWEKTGHWENYAEHMFTTSSENREYCIKPMNCPGHVQIFNQGLKSYRDLPLRMAEFGSCHRNEPSGALHGLMRVRGFTQDDAHIFCTEEQVRDEVNSCIKMVYDMYSTFGFEKIVVKLSTRPEKRIGSDDLWTRAEDDLAAALTENGIPFDYQPGEGAFYGPKIEFTLHDCLDRAWQCGTVQLDFSLPGRLSASYIGENNDRQVPVMIHRAILGSMERFIGILTEEYAGFFPTWLAPVQVVVMNITDSQSDYVQQVTKKLQDAGIRAKADLRNEKIGFKIREHTLRRVPYMLVCGDKEVESGKIAVRTRRGKDLGSLDVNVVVDQLLAEIRSRSLHQLEE.

In terms of domain architecture, TGS spans 1-61; the sequence is MPVITLPDGS…ESDAQLAIIT (61 aa). Residues 243–534 are catalytic; the sequence is DHRKIGKQLD…LTEEYAGFFP (292 aa). Residues cysteine 334, histidine 385, and histidine 511 each contribute to the Zn(2+) site.

Belongs to the class-II aminoacyl-tRNA synthetase family. In terms of assembly, homodimer. The cofactor is Zn(2+).

The protein resides in the cytoplasm. It carries out the reaction tRNA(Thr) + L-threonine + ATP = L-threonyl-tRNA(Thr) + AMP + diphosphate + H(+). In terms of biological role, catalyzes the attachment of threonine to tRNA(Thr) in a two-step reaction: L-threonine is first activated by ATP to form Thr-AMP and then transferred to the acceptor end of tRNA(Thr). Also edits incorrectly charged L-seryl-tRNA(Thr). In Yersinia enterocolitica serotype O:8 / biotype 1B (strain NCTC 13174 / 8081), this protein is Threonine--tRNA ligase.